Consider the following 305-residue polypeptide: MELIFLGTSAGVPTRTRNVTAILLNLQHPTQSGLWLFDCGEGTQHQLLHTTFNPGKLDKIFISHLHGDHLFGLPGLLCSRSMSGIIQPLTIYGPQGIREFVETALRISGSWIDYPLEIVEIGAGEILDDGLRKVTAYPLEHPLECYGYRIEEHDKPGALNAQALKAAGVPPGPLFQALKAGKTIMLEDGRQINGADYLAAPVPGKALAIFGDTGPCDAALDLAKGVDVMVHEATLDITMEAKANSRGHSSTRQAATLAREAGVGKLIITHVSSRYDDKGCQHLLRECRSIFPATELANDFTVFNV.

Residues histidine 64, histidine 66, aspartate 68, histidine 69, histidine 141, aspartate 212, and histidine 270 each contribute to the Zn(2+) site. Catalysis depends on aspartate 68, which acts as the Proton acceptor.

Belongs to the RNase Z family. RNase BN subfamily. In terms of assembly, homodimer. It depends on Zn(2+) as a cofactor.

Functionally, zinc phosphodiesterase, which has both exoribonuclease and endoribonuclease activities. The sequence is that of Ribonuclease BN from Escherichia coli O17:K52:H18 (strain UMN026 / ExPEC).